The following is a 228-amino-acid chain: Isoprenyl transferase (228 aa).

The active site involves Asp15. Asp15 is a Mg(2+) binding site. Substrate-binding positions include 16-19 (GNGR), Trp20, Arg28, His32, and 60-62 (STE). Asn63 (proton acceptor) is an active-site residue. Substrate-binding positions include Trp64, Arg66, Arg176, and 182–184 (RLS). Mg(2+) is bound at residue Glu195.

This sequence belongs to the UPP synthase family. As to quaternary structure, homodimer. Mg(2+) serves as cofactor.

In terms of biological role, catalyzes the condensation of isopentenyl diphosphate (IPP) with allylic pyrophosphates generating different type of terpenoids. This chain is Isoprenyl transferase, found in Wolinella succinogenes (strain ATCC 29543 / DSM 1740 / CCUG 13145 / JCM 31913 / LMG 7466 / NCTC 11488 / FDC 602W) (Vibrio succinogenes).